The sequence spans 294 residues: MIKIYNRKTKAYDVEQVAGLKYINWSYASPIGKSFLELFIKKKMFSKLYGNFCDSSLSKKKIKAFIDEFNIDMSLCNKNIDEFENFNDFFARTLTPEARPIDYSENILISPGDGRLSAFENIDLNKVVQIKGYTYSLKELIDDPKVAEEFEGGTCLILRLCPTDYHRFHFVDSGTCSESKKISGFYYSVNPIALNNVSELFCKNKREWSIFNSDNFGKILHVEVGATCVGTILQTYSPEKRVKKGEEKGYFKFGGSTTILFFKKDTIKIDSDIVEQTKLGFETKVNMGETIGNK.

Active-site charge relay system; for autoendoproteolytic cleavage activity residues include D113, H169, and S256. S256 functions as the Schiff-base intermediate with substrate; via pyruvic acid; for decarboxylase activity in the catalytic mechanism. S256 is subject to Pyruvic acid (Ser); by autocatalysis.

Belongs to the phosphatidylserine decarboxylase family. PSD-B subfamily. Prokaryotic type II sub-subfamily. As to quaternary structure, heterodimer of a large membrane-associated beta subunit and a small pyruvoyl-containing alpha subunit. Pyruvate serves as cofactor. Post-translationally, is synthesized initially as an inactive proenzyme. Formation of the active enzyme involves a self-maturation process in which the active site pyruvoyl group is generated from an internal serine residue via an autocatalytic post-translational modification. Two non-identical subunits are generated from the proenzyme in this reaction, and the pyruvate is formed at the N-terminus of the alpha chain, which is derived from the carboxyl end of the proenzyme. The autoendoproteolytic cleavage occurs by a canonical serine protease mechanism, in which the side chain hydroxyl group of the serine supplies its oxygen atom to form the C-terminus of the beta chain, while the remainder of the serine residue undergoes an oxidative deamination to produce ammonia and the pyruvoyl prosthetic group on the alpha chain. During this reaction, the Ser that is part of the protease active site of the proenzyme becomes the pyruvoyl prosthetic group, which constitutes an essential element of the active site of the mature decarboxylase.

The protein resides in the cell membrane. The enzyme catalyses a 1,2-diacyl-sn-glycero-3-phospho-L-serine + H(+) = a 1,2-diacyl-sn-glycero-3-phosphoethanolamine + CO2. The protein operates within phospholipid metabolism; phosphatidylethanolamine biosynthesis; phosphatidylethanolamine from CDP-diacylglycerol: step 2/2. In terms of biological role, catalyzes the formation of phosphatidylethanolamine (PtdEtn) from phosphatidylserine (PtdSer). The polypeptide is Phosphatidylserine decarboxylase proenzyme (Clostridium perfringens (strain ATCC 13124 / DSM 756 / JCM 1290 / NCIMB 6125 / NCTC 8237 / Type A)).